Here is a 127-residue protein sequence, read N- to C-terminus: MSREFKRSDRVAQELQKEIAVILQREVKDPRIGMVTVSDVEVSRDLAYAKIFVTFLFDNDQSVIEQGMKGLEKASPYIRSLVGKAMRLRIVPELRFIYDQSLVEGMRMSNLVSNVIKNDEAKHKEEE.

The protein belongs to the RbfA family. In terms of assembly, monomer. Binds 30S ribosomal subunits, but not 50S ribosomal subunits or 70S ribosomes.

It localises to the cytoplasm. Its function is as follows. One of several proteins that assist in the late maturation steps of the functional core of the 30S ribosomal subunit. Associates with free 30S ribosomal subunits (but not with 30S subunits that are part of 70S ribosomes or polysomes). Required for efficient processing of 16S rRNA. May interact with the 5'-terminal helix region of 16S rRNA. This chain is Ribosome-binding factor A, found in Actinobacillus pleuropneumoniae serotype 7 (strain AP76).